Reading from the N-terminus, the 224-residue chain is Protein GrpE (224 aa).

The interval 1-72 (MEKERDVAQE…KAKEEQNEEL (72 aa)) is disordered. Residues 10–19 (EQATYEQESP) are compositionally biased toward polar residues. Positions 20 to 67 (NAERQEELKENEHQEKNAPEEQEKVREENGRQDAQKDEIGDPEKAKEE) are enriched in basic and acidic residues.

It belongs to the GrpE family. As to quaternary structure, homodimer.

The protein resides in the cytoplasm. In terms of biological role, participates actively in the response to hyperosmotic and heat shock by preventing the aggregation of stress-denatured proteins, in association with DnaK and GrpE. It is the nucleotide exchange factor for DnaK and may function as a thermosensor. Unfolded proteins bind initially to DnaJ; upon interaction with the DnaJ-bound protein, DnaK hydrolyzes its bound ATP, resulting in the formation of a stable complex. GrpE releases ADP from DnaK; ATP binding to DnaK triggers the release of the substrate protein, thus completing the reaction cycle. Several rounds of ATP-dependent interactions between DnaJ, DnaK and GrpE are required for fully efficient folding. This Parageobacillus thermoglucosidasius (Geobacillus thermoglucosidasius) protein is Protein GrpE.